Reading from the N-terminus, the 479-residue chain is Sulfate adenylyltransferase subunit 1 (479 aa).

The tr-type G domain maps to 25–239 (KSLLRFLTCG…EVLETVDIQR (215 aa)). Residues 34–41 (GSVDDGKS) are G1. A GTP-binding site is contributed by 34–41 (GSVDDGKS). The G2 stretch occupies residues 92–96 (GITID). The G3 stretch occupies residues 113–116 (DTPG). GTP is bound by residues 113-117 (DTPGH) and 168-171 (NKMD). Residues 168–171 (NKMD) form a G4 region. The interval 206 to 208 (SAL) is G5.

The protein belongs to the TRAFAC class translation factor GTPase superfamily. Classic translation factor GTPase family. CysN/NodQ subfamily. In terms of assembly, heterodimer composed of CysD, the smaller subunit, and CysN.

It carries out the reaction sulfate + ATP + H(+) = adenosine 5'-phosphosulfate + diphosphate. Its pathway is sulfur metabolism; hydrogen sulfide biosynthesis; sulfite from sulfate: step 1/3. Its function is as follows. With CysD forms the ATP sulfurylase (ATPS) that catalyzes the adenylation of sulfate producing adenosine 5'-phosphosulfate (APS) and diphosphate, the first enzymatic step in sulfur assimilation pathway. APS synthesis involves the formation of a high-energy phosphoric-sulfuric acid anhydride bond driven by GTP hydrolysis by CysN coupled to ATP hydrolysis by CysD. The chain is Sulfate adenylyltransferase subunit 1 from Salmonella agona (strain SL483).